The chain runs to 388 residues: Deoxyuridine 5'-triphosphate nucleotidohydrolase (388 aa).

Basic and acidic residues predominate over residues 77 to 88; sequence EEKYDKEQHPGE. Disordered stretches follow at residues 77-96 and 336-388; these read EEKY…SPLP and THTP…PRHP. Acidic residues predominate over residues 351–363; the sequence is VDDDVDETEEDEK.

This sequence belongs to the dUTPase family. It depends on Mg(2+) as a cofactor.

It localises to the virion. The enzyme catalyses dUTP + H2O = dUMP + diphosphate + H(+). The protein operates within pyrimidine metabolism; dUMP biosynthesis; dUMP from dCTP (dUTP route): step 2/2. In terms of biological role, involved in nucleotide metabolism: produces dUMP, the immediate precursor of thymidine nucleotides and decreases the intracellular concentration of dUTP to avoid uracil incorporation into viral DNA. The sequence is that of Deoxyuridine 5'-triphosphate nucleotidohydrolase from Human cytomegalovirus (strain AD169) (HHV-5).